The primary structure comprises 434 residues: T-box transcription factor T homolog (434 aa).

The T-box DNA-binding region spans 50-220 (LWKKFHKLTN…YNPFAKAFLD (171 aa)). 2 stretches are compositionally biased toward polar residues: residues 355–364 (SGFSHVSSPQ) and 376–385 (HPTSSHQHNL). Positions 355–385 (SGFSHVSSPQSPLPTGLFRNPHPTSSHQHNL) are disordered.

As to expression, in the developing embryo, expressed in the mesenchyme founder cells, vegetal plate of the mesenchyme blastula, extending tip of the invaginating archenteron and, later, in the secondary mesenchyme cells.

Its subcellular location is the nucleus. Involved in the transcriptional regulation of genes required for mesoderm differentiation. This is T-box transcription factor T homolog from Hemicentrotus pulcherrimus (Sea urchin).